The chain runs to 557 residues: Potassium-transporting ATPase potassium-binding subunit (557 aa).

12 helical membrane-spanning segments follow: residues 5-25, 63-83, 132-152, 170-190, 253-273, 283-303, 329-349, 356-376, 379-399, 416-436, 484-504, and 526-546; these read GFLLIATFLLVLMVLARPLGS, LCAILGLNMLGLAVLFFMLLG, GLTVQNFLSAASGIAVIFALI, LLRITLWVLVPVALLIALFFI, FVQMLAIFLIPTALCFAFGEV, LLWAMSVIFVICVGVVMWAEV, VLVSSLFAVVTTAASCGAVIA, ALGGMVPMWLMQIGEVVFGGV, GLYGMMLFVLLAVFIAGLMIG, LTALAILVTPTLVLMGAALAM, LLAFCMFVGRFGVIIPVMAIA, and LFVGLLIGTVLLVGALTFIPA.

Belongs to the KdpA family. As to quaternary structure, the system is composed of three essential subunits: KdpA, KdpB and KdpC.

The protein resides in the cell inner membrane. Part of the high-affinity ATP-driven potassium transport (or Kdp) system, which catalyzes the hydrolysis of ATP coupled with the electrogenic transport of potassium into the cytoplasm. This subunit binds the periplasmic potassium ions and delivers the ions to the membrane domain of KdpB through an intramembrane tunnel. This Escherichia coli O17:K52:H18 (strain UMN026 / ExPEC) protein is Potassium-transporting ATPase potassium-binding subunit.